The following is a 58-amino-acid chain: Large ribosomal subunit protein uL30 (58 aa).

It belongs to the universal ribosomal protein uL30 family. Part of the 50S ribosomal subunit.

The sequence is that of Large ribosomal subunit protein uL30 from Bacteroides thetaiotaomicron (strain ATCC 29148 / DSM 2079 / JCM 5827 / CCUG 10774 / NCTC 10582 / VPI-5482 / E50).